The primary structure comprises 205 residues: Ribosomal RNA small subunit methyltransferase G (205 aa).

S-adenosyl-L-methionine-binding positions include Gly76, Leu81, 127–128, and Arg140; that span reads IE.

The protein belongs to the methyltransferase superfamily. RNA methyltransferase RsmG family.

The protein localises to the cytoplasm. It catalyses the reaction guanosine(527) in 16S rRNA + S-adenosyl-L-methionine = N(7)-methylguanosine(527) in 16S rRNA + S-adenosyl-L-homocysteine. Specifically methylates the N7 position of guanine in position 527 of 16S rRNA. The protein is Ribosomal RNA small subunit methyltransferase G of Francisella tularensis subsp. tularensis (strain WY96-3418).